A 372-amino-acid chain; its full sequence is 1,3,6,8-tetrahydroxynaphthalene synthase (372 aa).

Residue C138 is part of the active site.

It belongs to the thiolase-like superfamily. Chalcone/stilbene synthases family. In terms of assembly, homodimer.

It carries out the reaction 5 malonyl-CoA + 5 H(+) = naphthalene-1,3,6,8-tetrol + 5 CO2 + 5 CoA + H2O. It participates in pigment biosynthesis; melanin biosynthesis. Its function is as follows. Involved in the biosynthesis of melanin but also various secondary metabolites containing a naphthoquinone ring. Catalyzes the iterative condensation of five CoA-linked malonyl units to form a pentaketide intermediate. THNS subsequently catalyzes the dual intramolecular Claisen and aldol condensations of this linear intermediate to produce the fused ring of 1,3,6,8-tetrahydroxynaphthalene (THN). This is 1,3,6,8-tetrahydroxynaphthalene synthase from Streptomyces griseus.